A 485-amino-acid chain; its full sequence is GlcNAc-binding protein A (485 aa).

A signal peptide spans 1–29; sequence MKKQPQKTLLAIALSVVSGTAMSHGYVSA. Residues 30–200 enclose the Chitin-binding type-4 domain; that stretch reads VENGVAEARV…SFYNVIDVKF (171 aa). The Chitin-binding type-3 domain maps to 437 to 478; sequence ADTKVLASDGAIYQCKPFPYSGYCVQWTPTATQYQPGTGSHW.

Belongs to the GbpA family.

The protein resides in the secreted. In terms of biological role, probably interacts with GlcNAc residues. May promote attachment to both epithelial cell surfaces and chitin. The protein is GlcNAc-binding protein A of Vibrio vulnificus (strain CMCP6).